The following is a 315-amino-acid chain: Sulfate adenylyltransferase subunit 2 1 (315 aa).

Residues 287–315 (DSSSSERQGRAIDHDQSGSMERKKREGYF) form a disordered region. Residues 293–315 (RQGRAIDHDQSGSMERKKREGYF) are compositionally biased toward basic and acidic residues.

The protein belongs to the PAPS reductase family. CysD subfamily. As to quaternary structure, heterodimer composed of CysD, the smaller subunit, and CysN.

The enzyme catalyses sulfate + ATP + H(+) = adenosine 5'-phosphosulfate + diphosphate. It functions in the pathway sulfur metabolism; hydrogen sulfide biosynthesis; sulfite from sulfate: step 1/3. Functionally, with CysN forms the ATP sulfurylase (ATPS) that catalyzes the adenylation of sulfate producing adenosine 5'-phosphosulfate (APS) and diphosphate, the first enzymatic step in sulfur assimilation pathway. APS synthesis involves the formation of a high-energy phosphoric-sulfuric acid anhydride bond driven by GTP hydrolysis by CysN coupled to ATP hydrolysis by CysD. This Alkalilimnicola ehrlichii (strain ATCC BAA-1101 / DSM 17681 / MLHE-1) protein is Sulfate adenylyltransferase subunit 2 1.